A 152-amino-acid polypeptide reads, in one-letter code: SXP/RAL-2 family protein Ani s 5 (152 aa).

A signal peptide spans 1–18 (MKTLIVAALFCTIGMALA). 4 necessary for IgE-binding regions span residues 25–42 (PPFL…FFEL), 49–54 (KTDPEI), 58–66 (LDAWVDTLG), and 103–120 (KKAD…SLNG). 2 igG4-binding regions span residues 49 to 68 (KTDP…LGGD) and 118 to 137 (LNGI…LPQS). An igE-binding and IgG4-binding region spans residues 127-146 (IQAIYKTLPQSVKDELEKGI).

Belongs to the SXP/RAL-2 family. Monomer. In terms of tissue distribution, excretory gland, ventriculus, and the luminal epithelium of the intestine of the larvae.

The protein localises to the secreted. This Anisakis simplex (Herring worm) protein is SXP/RAL-2 family protein Ani s 5.